A 267-amino-acid polypeptide reads, in one-letter code: Cytokinesis defective protein 7 (267 aa).

Residues 244 to 267 (RNQADQSILPPSGDQQHHRSELHA) are disordered. A compositionally biased stretch (basic and acidic residues) spans 258 to 267 (QQHHRSELHA).

The polypeptide is Cytokinesis defective protein 7 (Caenorhabditis elegans).